Reading from the N-terminus, the 167-residue chain is Schlafen-like protein (167 aa).

This sequence belongs to the Schlafen family. Subgroup poxviridae B3 subfamily.

The sequence is that of Schlafen-like protein from Bos taurus (Bovine).